We begin with the raw amino-acid sequence, 506 residues long: Chaperone SurA (506 aa).

The first 29 residues, 1-29 (MMRRLHSSRRFSGSLLALALGLALPLAHA), serve as a signal peptide directing secretion. PpiC domains are found at residues 219–320 (PVML…KVLQ) and 351–450 (VTQT…QVLE).

The protein localises to the periplasm. The catalysed reaction is [protein]-peptidylproline (omega=180) = [protein]-peptidylproline (omega=0). In terms of biological role, chaperone involved in the correct folding and assembly of outer membrane proteins. Recognizes specific patterns of aromatic residues and the orientation of their side chains, which are found more frequently in integral outer membrane proteins. May act in both early periplasmic and late outer membrane-associated steps of protein maturation. This Bordetella avium (strain 197N) protein is Chaperone SurA.